The chain runs to 348 residues: NADH-ubiquinone oxidoreductase chain 2 (348 aa).

Helical transmembrane passes span 3-23 (PYVLMILISSLGLGTTLTFAS), 25-45 (HWLLAWMGLEINTLAILRLMA), 60-80 (FLTQATAAAMILFAATTNAWA), 99-119 (MMALALKVGLAPMHFWMPEVL), 122-142 (LDLTMGLILSTWQKLAPFALI), 150-170 (NPMLLTTLGLLSTLIGGWGGL), 178-196 (ILAYSSIAHMGWMIIILQY), 200-219 (LTLIALGLYIFMTSAAFLSL), 246-266 (LTLLSLGGLPPLTGFMPKWLI), 274-294 (DLPATATIMALAALLSLYFYL), and 328-348 (LMMIGALGLLPLTPTIMALFF).

This sequence belongs to the complex I subunit 2 family.

It is found in the mitochondrion inner membrane. It catalyses the reaction a ubiquinone + NADH + 5 H(+)(in) = a ubiquinol + NAD(+) + 4 H(+)(out). Functionally, core subunit of the mitochondrial membrane respiratory chain NADH dehydrogenase (Complex I) that is believed to belong to the minimal assembly required for catalysis. Complex I functions in the transfer of electrons from NADH to the respiratory chain. The immediate electron acceptor for the enzyme is believed to be ubiquinone. The protein is NADH-ubiquinone oxidoreductase chain 2 (MT-ND2) of Formosania lacustris (Oriental stream loach).